The following is a 396-amino-acid chain: Digeranylgeranylglycerophospholipid reductase 2 (396 aa).

FAD is bound by residues Ala13, Glu32, Cys43, Ala44, Gly46, Arg92, Ala116, Asp278, Gly290, and Leu291.

This sequence belongs to the geranylgeranyl reductase family. DGGGPL reductase subfamily. FAD is required as a cofactor.

The catalysed reaction is a 2,3-bis-O-phytanyl-sn-glycerol 1-phospholipid + 8 A = a 2,3-bis-O-(geranylgeranyl)-sn-glycerol 1-phospholipid + 8 AH2. It catalyses the reaction 2,3-bis-O-(phytanyl)-sn-glycerol 1-phosphate + 8 A = 2,3-bis-O-(geranylgeranyl)-sn-glycerol 1-phosphate + 8 AH2. The enzyme catalyses CDP-2,3-bis-O-(geranylgeranyl)-sn-glycerol + 8 AH2 = CDP-2,3-bis-O-(phytanyl)-sn-glycerol + 8 A. It carries out the reaction archaetidylserine + 8 AH2 = 2,3-bis-O-phytanyl-sn-glycero-3-phospho-L-serine + 8 A. Its pathway is membrane lipid metabolism; glycerophospholipid metabolism. In terms of biological role, is involved in the reduction of 2,3-digeranylgeranylglycerophospholipids (unsaturated archaeols) into 2,3-diphytanylglycerophospholipids (saturated archaeols) in the biosynthesis of archaeal membrane lipids. Catalyzes the formation of archaetidic acid (2,3-di-O-phytanyl-sn-glyceryl phosphate) from 2,3-di-O-geranylgeranylglyceryl phosphate (DGGGP) via the hydrogenation of each double bond of the isoprenoid chains. Is also probably able to reduce double bonds of geranyl groups in CDP-2,3-bis-O-(geranylgeranyl)-sn-glycerol and archaetidylserine, thus acting at various stages in the biosynthesis of archaeal membrane lipids. This is Digeranylgeranylglycerophospholipid reductase 2 from Methanopyrus kandleri (strain AV19 / DSM 6324 / JCM 9639 / NBRC 100938).